A 304-amino-acid polypeptide reads, in one-letter code: Ubiquitin thioesterase OTU1 (304 aa).

The interval 5-83 (RCKTREGTQL…IVEEDKSKLR (79 aa)) is UBX-like. An OTU domain is found at 105–230 (IVRRVVPADN…GIHYDPLQRQ (126 aa)). The cys-loop stretch occupies residues 110 to 116 (VPADNSC). D113 is a catalytic residue. Catalysis depends on C116, which acts as the Nucleophile. Residues 169–179 (IRREDTWGGAI) are variable-loop. The his-loop stretch occupies residues 219–223 (YDGIH). I222 provides a ligand contact to substrate. H223 is an active-site residue. The tract at residues 247 to 252 (DEALVQ) is S2 site. The C2H2-type zinc-finger motif lies at 274–298 (LRCMACQKGLTGQSAARDHAKETGH). H298 is an active-site residue.

Its subcellular location is the cytoplasm. It catalyses the reaction Thiol-dependent hydrolysis of ester, thioester, amide, peptide and isopeptide bonds formed by the C-terminal Gly of ubiquitin (a 76-residue protein attached to proteins as an intracellular targeting signal).. In terms of biological role, hydrolase that can remove conjugated ubiquitin from proteins and participates in endoplasmic reticulum-associated degradation (ERAD) for misfolded lumenal proteins. May act by triming the ubiquitin chain on the associated substrate to facilitate their threading through the VCP/p97 pore. Ubiquitin moieties on substrates may present a steric impediment to the threading process when the substrate is transferred to the VCP pore and threaded through VCP's axial channel. Mediates deubiquitination of 'Lys-27'-, 'Lys-29'- and 'Lys-33'-linked polyubiquitin chains. Also able to hydrolyze 'Lys-11'-linked ubiquitin chains. Cleaves both polyubiquitin and di-ubiquitin. The chain is Ubiquitin thioesterase OTU1 (yod1) from Xenopus laevis (African clawed frog).